The following is an 83-amino-acid chain: Hainantoxin-III 8 (83 aa).

The first 21 residues, 1-21 (MKASMFLALAGLVLLFVVGYA), serve as a signal peptide directing secretion. The propeptide occupies 22 to 48 (SESEEKEFPRELLSKIFAVDDFTGEER). 3 disulfide bridges follow: C50–C65, C57–C70, and C64–C77. Leucine amide is present on L81.

The protein belongs to the neurotoxin 10 (Hwtx-1) family. 15 (Hntx-3) subfamily. Monomer. Expressed by the venom gland.

Its subcellular location is the secreted. Its function is as follows. Selective antagonist of neuronal tetrodotoxin (TTX)-sensitive voltage-gated sodium channels (IC(50)=1270 nM on Nav1.1/SCN1A, 270 nM on Nav1.2/SCN2A, 491 nM on Nav1.3/SCN3A and 232 nM on Nav1.7/SCN9A). This toxin suppress Nav1.7 current amplitude without significantly altering the activation, inactivation, and repriming kinetics. Short extreme depolarizations partially activate the toxin-bound channel, indicating voltage-dependent inhibition of this toxin. This toxin increases the deactivation of the Nav1.7 current after extreme depolarizations. The toxin-Nav1.7 complex is gradually dissociated upon prolonged strong depolarizations in a voltage-dependent manner, and the unbound toxin rebinds to Nav1.7 after a long repolarization. Moreover, analysis of chimeric channels showed that the DIIS3-S4 linker is critical for toxin binding to Nav1.7. These data are consistent with this toxin interacting with Nav1.7 site 4 and trapping the domain II voltage sensor in the closed state. The protein is Hainantoxin-III 8 of Cyriopagopus hainanus (Chinese bird spider).